We begin with the raw amino-acid sequence, 192 residues long: Protein MTH_857 (192 aa).

The 184-residue stretch at 9–192 (DEGRTLVKIA…FQAQIFHEDG (184 aa)) folds into the AMMECR1 domain.

This Methanothermobacter thermautotrophicus (strain ATCC 29096 / DSM 1053 / JCM 10044 / NBRC 100330 / Delta H) (Methanobacterium thermoautotrophicum) protein is Protein MTH_857.